The chain runs to 1204 residues: Erythroid differentiation-related factor 1 (1204 aa).

4 disordered regions span residues 1-30, 220-264, 483-527, and 586-613; these read MGDAKEAGAEGPPAGAAAREGLSLLSQAES, QPVS…ASSQ, PKKE…SDDS, and KKESDLPAADPSTPIPLKYEDESSRGGP. 3 stretches are compositionally biased toward low complexity: residues 9-30, 223-241, and 253-263; these read AEGPPAGAAAREGLSLLSQAES, SSTTEQQESSSSDQTNDSE, and SSVSEDPSASS. Positions 496–513 are enriched in acidic residues; it reads NSDESYSEEEEEMPDSDE. TPR repeat units follow at residues 693-726 and 920-953; these read CCLCTNMLSEVLLFLSQYLTLCGDIQLMLAQNAN and DIHPAVWDSVNWELSTTYFTMATLQQDYAPLSRK.

It is found in the nucleus. Transcription factor involved in erythroid differentiation. Involved in transcriptional activation of the globin gene. The sequence is that of Erythroid differentiation-related factor 1 (EDRF1) from Pongo abelii (Sumatran orangutan).